Here is a 76-residue protein sequence, read N- to C-terminus: Acyl carrier protein (76 aa).

Residues 1–76 (MSVEEKISKI…DAIAYIKNKQ (76 aa)) enclose the Carrier domain. O-(pantetheine 4'-phosphoryl)serine is present on S36.

This sequence belongs to the acyl carrier protein (ACP) family. 4'-phosphopantetheine is transferred from CoA to a specific serine of apo-ACP by AcpS. This modification is essential for activity because fatty acids are bound in thioester linkage to the sulfhydryl of the prosthetic group.

The protein resides in the cytoplasm. It participates in lipid metabolism; fatty acid biosynthesis. Its function is as follows. Carrier of the growing fatty acid chain in fatty acid biosynthesis. In Nitratidesulfovibrio vulgaris (strain DSM 19637 / Miyazaki F) (Desulfovibrio vulgaris), this protein is Acyl carrier protein.